A 698-amino-acid polypeptide reads, in one-letter code: Protein arginine N-methyltransferase 7 (698 aa).

2 SAM-dependent MTase PRMT-type domains span residues 14 to 357 (QNTW…YSLW) and 366 to 698 (EKPA…EKSE).

Belongs to the class I-like SAM-binding methyltransferase superfamily. Protein arginine N-methyltransferase family. PRMT7 subfamily.

Functionally, essential arginine methyltransferase that can both catalyze the formation of omega-N monomethylarginine (MMA) and symmetrical dimethylarginine (sDMA). Specifically mediates the symmetrical dimethylation of arginine residues in the small nuclear ribonucleoproteins SmD1 and SmD3. In Drosophila mojavensis (Fruit fly), this protein is Protein arginine N-methyltransferase 7 (Art7).